The chain runs to 353 residues: Purine nucleoside phosphorylase (353 aa).

Positions 1–16 (MSKFSYLQNGKASTNG) are enriched in polar residues. Residues 1–42 (MSKFSYLQNGKASTNGVPHANGHHQQHQNGHSNGVARNGGTA) form a disordered region. Phosphate contacts are provided by residues Ser98, His129, 149–151 (RFH), and Ala181. An a purine D-ribonucleoside-binding site is contributed by Glu266. Residue Ser285 coordinates phosphate. Asn308 contributes to the a purine D-ribonucleoside binding site.

It belongs to the PNP/MTAP phosphorylase family. Homotrimer.

It carries out the reaction inosine + phosphate = alpha-D-ribose 1-phosphate + hypoxanthine. The catalysed reaction is guanosine + phosphate = alpha-D-ribose 1-phosphate + guanine. The enzyme catalyses 2'-deoxyguanosine + phosphate = 2-deoxy-alpha-D-ribose 1-phosphate + guanine. It catalyses the reaction 2'-deoxyinosine + phosphate = 2-deoxy-alpha-D-ribose 1-phosphate + hypoxanthine. The protein operates within purine metabolism; purine nucleoside salvage. Its activity is regulated as follows. Inhibited by 5'-deaza-1'-aza-2c-deoxy-1'-(9-methylene) immucillin-H (DADMe-ImmH). Its function is as follows. As part of the purine salvage pathway, catalyzes the phosphorolytic breakdown of the N-glycosidic bond in the beta-(deoxy)ribonucleoside molecules, with the formation of the corresponding free purine bases and pentose-1-phosphate. Preferentially acts on 2'-deoxyinosine and inosine, and to a lesser extent on 2'-deoxyguanosine and guanosine. Has no activity towards adenosine or 2'-deoxyadenosine. The chain is Purine nucleoside phosphorylase from Anopheles gambiae (African malaria mosquito).